Consider the following 2629-residue polypeptide: MEKLCGHVPGHSDILSLKNRCLTMLPDLQPLEKIHGHRSVHSDILSLENQCLTMLSDLQPTERIDGHISVHPDILSLENRCLTMLPDLQPLEKLCGHMSSHPDVLSLENQCLATLPTVKSTALTSPLLQGLHISHTAQADLHSLKTSNCLLPELPTKKTPCFSEELDLPPGPRALKSMSATAQVQEVALGQWCVSKEKEFQEEESTEVPMPLYSLSLEEEEVEAPVLKLTSGDSGFHPETTDQVLQEKKMALLTLLCSALASNVNVKDASDLTRASILEVCSALASLEPEFILKASLYARQQLNLRDIANTVLAVAALLPACRPHVRRYYSAIVHLPSDWIQVAEFYQSLAEGDEKKLVSLPACLRAAMTDKFAEFDEYQLAKYNPRKHRSKRRSRQPPRPQKTERPFSERGKCFPKSLWPLKNEQITFEAAYNAMPEKNRLPRFTLKKLVEYLHIHKPAQHVQALLGYRYPATLELFSRSHLPGPWESSRAGQRMKLRRPETWERELSLRGNKASVWEELIDNGKLPFMAMLRNLCNLLRTGISARHHELVLQRLQHEKSVVHSRQFPFRFLNAHDSIDKLEAQLRSKASPFPSNTTLMKRIMIRNSKKNRRPASRKHLCTLTRRQLRAAMTIPVMYEQLKREKLRLHKARQWNCDVELLERYRQALETAVNLSVKHNLSPMPGRTLLVYLTDANADRLCPKSHSQGPPLNYVLLLIGMMVARAEQVTVCLCGGGFVKTPVLTADEGILKTAIKLQAQVQELEGNDEWPLDTFGKYLLSLAVQRTPIDRVILFGQRMDTELLKVAKQIIWQHVNSKCLFVGVLLQKTQYISPNLNPNDVTLSGCTDGILKFIAEHGASRLLEHVGQLDKLFKIPPPPGKTQAPSLRPLEENIPGPLGPISQHGWRNIRLFISSTFRDMHGERDLLMRSVLPALQARVFPHRISLHAIDLRWGITEEETRRNRQLEVCLGEVENSQLFVGILGSRYGYIPPSYDLPDHPHFHWTHEYPSGRSVTEMEVMQFLNRGQRSQPSAQALIYFRDPDFLSSVPDAWKPDFISESEEAAHRVSELKRYLHEQKEVTCRSYSCEWGGVAAGRPYTGGLEEFGQLVLQDVWSMIQKQHLQPGAQLEQPTSISEDDLIQTSFQQLKTPTSPARPRLLQDTVQQLLLPHGRLSLVTGQAGQGKTAFLASLVSALKVPDQPNEPPFVFFHFAAARPDQCLALNLLRRLCTHLRQKLGELSALPSTYRGLVWELQQKLLLKFAQSLQPAQTLVLIIDGADKLVDRNGQLISDWIPKSLPRRVHLVLSVSSDSGLGETLQQSQGAYVVALGSLVPSSRAQLVREELALYGKRLEESPFNNQMRLLLAKQGSSLPLYLHLVTDYLRLFTLYEQVSERLRTLPATLPLLLQHILSTLEQEHGHDVLPQALTALEVTRSGLTVDQLHAILSTWLILPKETKSWEEVLAASHSGNPFPLCPFAYLVQSLRSLLGEGPVERPGARLCLSDGPLRTTIKRRYGKRLGLEKTAHVLIAAHLWKTCDPDASGTFRSCPPEALKDLPYHLLQSGNHGLLAEFLTNLHVVAAYLEVGLVPDLLEAHVLYASSKPEANQKLPAADVAVFHTFLRQQASLLTQYPLLLLQQAASQPEESPVCCQAPLLTQRWHDQFTLKWINKPQTLKGQQSLSLTMSSSPTAVAFSPNGQRAAVGTASGTIYLLNLKTWQEEKAVVSGCDGISSFAFLSDTALFLTTFDGHLELWDLQHGCWVFQTKAHQYQITGCCLSPDRRLLATVCLGGYLKLWDTVRGQLAFQYTHPKSLNCVAFHPEGQVVATGSWAGSITFFQADGLKVTKELGAPGPSVCSLAFNKPGKIVAVGRIDGTVELWAWQEGARLAAFPAQCGCVSAVLFLHAGDRFLTAGEDGKAQLWSGFLGRPRGCLGSLPLSPALSVALNPDGDQVAVGYREDGINIYKISSGSQGPQHQELNVAVSALVWLSPSVLVSGAEDGSLHGWMFKGDSLHSLWLLSRYQKPVLGLAASRELMAAASEDFTVRLWPRQLLTQPHVHAVELPCCAELRGHEGPVCCCSFSPDGGILATAGRDRNLLCWDMKIAQAPLLIHTFSSCHRDWITGCAWTKDNILVSCSSDGSVGLWNPEAGQQLGQFSGHQSAVSAVVAVEEHIVSVSRDGTLKVWDHQGVELTSIPAHSGPISQCAAALEPRPGGQPGSELLVVTVGLDGATKLWHPLLVCQIRTLQGHSGPVTAAAASEASGLLLTSDDSSVQLWQIPKEADDSYKPRSSVAITAVAWAPDGSMVVSGNEAGELTLWQQAKAVATAQAPGRVSHLIWYSANSFFVLSANENVSEWQVGLRKGSTSTSSSLHLKRVLQEDWGVLTGLGLAPDGQSLILMKEDVELLEMKPGSIPSSICRRYGVHSSILCTSKEYGLFYLQQGDSGLLSILEQKESGEFEEILDFNLNLNNPNGSPVSITQAKPESESSLLCATSDGMLWNLSECTSEGEWIVDNIWQKKAKKPKTQTLETELSPHSELDFSIDCWIDPTNLKAQQCKKIHLGSVTALHVLPGLLVTASKDRDVKLWERPSMQLLGLFRCEGPVSCLEPWMEPSSPLQLAVGDTQGNLYFLSWE.

4 TEP1 N-terminal repeats span residues 1–30, 31–60, 61–90, and 91–120; these read MEKLCGHVPGHSDILSLKNRCLTMLPDLQP, LEKIHGHRSVHSDILSLENQCLTMLSDLQP, TERIDGHISVHPDILSLENRCLTMLPDLQP, and LEKLCGHMSSHPDVLSLENQCLATLPTVKS. The 459-residue stretch at 227 to 685 folds into the TROVE domain; it reads LKLTSGDSGF…VKHNLSPMPG (459 aa). The span at 386 to 397 shows a compositional bias: basic residues; that stretch reads PRKHRSKRRSRQ. Residues 386–412 form a disordered region; the sequence is PRKHRSKRRSRQPPRPQKTERPFSERG. Residues 402 to 412 show a composition bias toward basic and acidic residues; sequence QKTERPFSERG. The 408-residue stretch at 1171 to 1578 folds into the NACHT domain; sequence RLSLVTGQAG…EFLTNLHVVA (408 aa). 1177–1184 lines the ATP pocket; it reads GQAGQGKT. WD repeat units lie at residues 1420 to 1462, 1681 to 1720, 1723 to 1761, 1764 to 1803, 1805 to 1844, 1847 to 1886, 1889 to 1930, 1932 to 1971, 1974 to 2013, 2015 to 2054, 2067 to 2106, 2113 to 2151, 2154 to 2191, 2193 to 2241, 2244 to 2282, 2285 to 2324, 2326 to 2362, 2375 to 2424, 2467 to 2507, 2555 to 2592, and 2594 to 2628; these read VLPQ…EVLA, TMSSSPTAVAFSPNGQRAAVGTASGTIYLLNLKTWQEEKA, SGCDGISSFAFLSDTALFLTTFDGHLELWDLQHGCWVFQ, AHQYQITGCCLSPDRRLLATVCLGGYLKLWDTVRGQLAFQ, THPKSLNCVAFHPEGQVVATGSWAGSITFFQADGLKVTKE, APGPSVCSLAFNKPGKIVAVGRIDGTVELWAWQEGARLAA, AQCG…GCLG, LPLSPALSVALNPDGDQVAVGYREDGINIYKISSGSQGPQ, ELNVAVSALVWLSPSVLVSGAEDGSLHGWMFKGDSLHSLW, LSRYQKPVLGLAASRELMAAASEDFTVRLWPRQLLTQPHV, GHEGPVCCCSFSPDGGILATAGRDRNLLCWDMKIAQAPLL, CHRDWITGCAWTKDNILVSCSSDGSVGLWNPEAGQQLGQ, GHQSAVSAVVAVEEHIVSVSRDGTLKVWDHQGVELTSI, AHSG…QIRT, GHSGPVTAAAASEASGLLLTSDDSSVQLWQIPKEADDSY, RSSVAITAVAWAPDGSMVVSGNEAGELTLWQQAKAVATAQ, PGRVSHLIWYSANSFFVLSANENVSEWQVGLRKGSTS, EDWG…SSIL, PNGS…GEWI, IHLGSVTALHVLPGLLVTASKDRDVKLWERPSMQLLGL, and RCEGPVSCLEPWMEPSSPLQLAVGDTQGNLYFLSW.

As to quaternary structure, associated component of the telomerase holoenzyme complex. Component of the vault ribonucleoprotein particle, at least composed of MVP, PARP4 and one or more vault RNAs (vRNAs). Binds to VAULTRC1, VAULTRC2 and VAULTRC4/hvg4 vRNAs. Ubiquitous.

The protein resides in the nucleus. The protein localises to the chromosome. It localises to the telomere. Its function is as follows. Component of the telomerase ribonucleoprotein complex that is essential for the replication of chromosome termini. Also a component of the ribonucleoprotein vaults particle, a multi-subunit structure involved in nucleo-cytoplasmic transport. Responsible for the localizing and stabilizing vault RNA (vRNA) association in the vault ribonucleoprotein particle. The protein is Telomerase protein component 1 (Tep1) of Mus musculus (Mouse).